We begin with the raw amino-acid sequence, 413 residues long: Gamma-lactamase FDB1 (413 aa).

Residues His126, His128, Asp130, His131, His211, Asp235, and His323 each contribute to the Zn(2+) site.

Belongs to the metallo-beta-lactamase superfamily.

It functions in the pathway xenobiotic degradation. Gamma-lactamase; part of the Fusarium detoxification of benzoxazolinone cluster involved in the degradation of benzoxazolinones produced by the host plant. Maize, wheat, and rye produce the 2 benzoxazinone phytoanticipins 2,4-dihy-droxy-7-methoxy-1,4-benzoxazin-3-one (DIMBOA) and 2,4-dihydroxy-1,4-benzoxazin-3-one (DIBOA) that, due to their inherent instability once released, spontaneously degrade to the more stable corresponding benzoxazolinones, 6-methoxy-2-benzoxazolinone (MBOA) and 2-benzoxazolinone (BOA), respectively. The first step in the detoxification of benzoxazolinones involves the hydrolysis of the cyclic ester bond of benzoxazolinones by the gamma-lactamase FDB1 to aminophenols. FDB1 is able to convert BOA into 2-aminophenol (2-AP), as well as MBOA into 5-methoxy-2-aminophenol (2-AMP). The N-malonyltransferase FDB2 then metabolizes aminophenols via N-malonylation to non-toxic malonamic acids. FDB2 converts 2-AP into N-(2-hydroxyphenyl) malonamic acid (HPMA) and 2-AMP into N-(2-hydroxy-4-methoxyphenyl) malonamic acid (HMPMA). The cluster also contains 2 transcription factors (FDB3 and FPSE_08121), an aldo-keto reductase (FPSE_08125) that possibly associates with a ketone component of BOA and MBOA degradation, an esterase (FPSE_08126), an acyl-CoA transferase (FPSE_08120), a solute carrier protein (FPSE_08119) and a transmembrane transporter (FPSE_08127) proposed to shuttle metabolites of benzoxazolinone degradation. In Fusarium pseudograminearum (strain CS3096) (Wheat and barley crown-rot fungus), this protein is Gamma-lactamase FDB1.